A 100-amino-acid polypeptide reads, in one-letter code: uncharacterized protein (100 aa).

The protein belongs to the ycf15 family.

The protein localises to the plastid. It localises to the chloroplast. This is an uncharacterized protein from Panax ginseng (Korean ginseng).